Here is a 234-residue protein sequence, read N- to C-terminus: Urease accessory protein UreF (234 aa).

It belongs to the UreF family. UreD, UreF and UreG form a complex that acts as a GTP-hydrolysis-dependent molecular chaperone, activating the urease apoprotein by helping to assemble the nickel containing metallocenter of UreC. The UreE protein probably delivers the nickel.

The protein localises to the cytoplasm. In terms of biological role, required for maturation of urease via the functional incorporation of the urease nickel metallocenter. The protein is Urease accessory protein UreF of Azoarcus sp. (strain BH72).